The sequence spans 1517 residues: DNA-directed RNA polymerase subunit beta' (1517 aa).

4 residues coordinate Zn(2+): C71, C73, C86, and C89. Mg(2+)-binding residues include D482, D484, and D486. C812, C886, C893, and C896 together coordinate Zn(2+).

Belongs to the RNA polymerase beta' chain family. The RNAP catalytic core consists of 2 alpha, 1 beta, 1 beta' and 1 omega subunit. When a sigma factor is associated with the core the holoenzyme is formed, which can initiate transcription. Mg(2+) is required as a cofactor. It depends on Zn(2+) as a cofactor.

It carries out the reaction RNA(n) + a ribonucleoside 5'-triphosphate = RNA(n+1) + diphosphate. Functionally, DNA-dependent RNA polymerase catalyzes the transcription of DNA into RNA using the four ribonucleoside triphosphates as substrates. In Campylobacter jejuni subsp. jejuni serotype O:6 (strain 81116 / NCTC 11828), this protein is DNA-directed RNA polymerase subunit beta'.